A 230-amino-acid polypeptide reads, in one-letter code: NADH dehydrogenase [ubiquinone] iron-sulfur protein 8, mitochondrial (230 aa).

The transit peptide at 1–42 directs the protein to the mitochondrion; that stretch reads MAAILARKSLSALRSRQLVLAGQAWQQGANTSNGTLLGTRTF. 4Fe-4S ferredoxin-type domains lie at 122-151 and 161-190; these read RRYP…IEAE and TRYD…EGPN. Residues C131, C134, C137, C141, C170, C173, C176, and C180 each coordinate [4Fe-4S] cluster.

This sequence belongs to the complex I 23 kDa subunit family. Complex I is composed of about 45 different subunits. This is a component of the iron-sulfur (IP) fragment of the enzyme. The cofactor is [4Fe-4S] cluster.

Its subcellular location is the mitochondrion. The enzyme catalyses a ubiquinone + NADH + 5 H(+)(in) = a ubiquinol + NAD(+) + 4 H(+)(out). Functionally, core subunit of the mitochondrial membrane respiratory chain NADH dehydrogenase (Complex I) that is believed to belong to the minimal assembly required for catalysis. Complex I functions in the transfer of electrons from NADH to the respiratory chain. The immediate electron acceptor for the enzyme is believed to be ubiquinone. May donate electrons to ubiquinone. This chain is NADH dehydrogenase [ubiquinone] iron-sulfur protein 8, mitochondrial, found in Nicotiana tabacum (Common tobacco).